The following is a 101-amino-acid chain: Urease subunit beta (101 aa).

The protein belongs to the urease beta subunit family. As to quaternary structure, heterotrimer of UreA (gamma), UreB (beta) and UreC (alpha) subunits. Three heterotrimers associate to form the active enzyme.

It localises to the cytoplasm. It catalyses the reaction urea + 2 H2O + H(+) = hydrogencarbonate + 2 NH4(+). It functions in the pathway nitrogen metabolism; urea degradation; CO(2) and NH(3) from urea (urease route): step 1/1. This is Urease subunit beta from Burkholderia mallei (strain NCTC 10247).